The sequence spans 401 residues: Probable tRNA sulfurtransferase (401 aa).

Positions Glu60–Asp165 constitute a THUMP domain. Residues Met183 to Leu184, His208 to Phe209, Arg265, Gly287, and Gln296 contribute to the ATP site.

This sequence belongs to the ThiI family.

It localises to the cytoplasm. It catalyses the reaction [ThiI sulfur-carrier protein]-S-sulfanyl-L-cysteine + a uridine in tRNA + 2 reduced [2Fe-2S]-[ferredoxin] + ATP + H(+) = [ThiI sulfur-carrier protein]-L-cysteine + a 4-thiouridine in tRNA + 2 oxidized [2Fe-2S]-[ferredoxin] + AMP + diphosphate. The catalysed reaction is [ThiS sulfur-carrier protein]-C-terminal Gly-Gly-AMP + S-sulfanyl-L-cysteinyl-[cysteine desulfurase] + AH2 = [ThiS sulfur-carrier protein]-C-terminal-Gly-aminoethanethioate + L-cysteinyl-[cysteine desulfurase] + A + AMP + 2 H(+). Its pathway is cofactor biosynthesis; thiamine diphosphate biosynthesis. Functionally, catalyzes the ATP-dependent transfer of a sulfur to tRNA to produce 4-thiouridine in position 8 of tRNAs, which functions as a near-UV photosensor. Also catalyzes the transfer of sulfur to the sulfur carrier protein ThiS, forming ThiS-thiocarboxylate. This is a step in the synthesis of thiazole, in the thiamine biosynthesis pathway. The sulfur is donated as persulfide by IscS. The chain is Probable tRNA sulfurtransferase from Geobacillus sp. (strain WCH70).